The following is a 1538-amino-acid chain: Myosin-9 (1538 aa).

Residues 16–65 (SIGSHVWFEDPEVAWIDGEVEKINGQEVVIQATTGKKVTAKLSKIYPKDV) form the Myosin N-terminal SH3-like domain. In terms of domain architecture, Myosin motor spans 70 to 740 (GGVDDMTKLS…QMAELDARRA (671 aa)). ATP-binding positions include 164-171 (GESGAGKT) and 217-225 (NNNSSRFGK). Actin-binding stretches follow at residues 503 to 537 (LIEK…YQTF), 539 to 562 (THKR…AGEV), 597 to 621 (FPPL…KLQL), and 621 to 643 (LQQL…KPNN). IQ domains follow at residues 743-772 (LSSA…ATIS), 766-795 (LRKA…EAAA), 791-820 (REAA…ASLV), 814-843 (LHVA…TKAA), 839-868 (QTKA…GVVL), and 862-891 (LKNG…AARE). Residues 892 to 1064 (TGALKEAKDM…VLRQQAVSMA (173 aa)) are a coiled coil. Basic and acidic residues predominate over residues 1017-1032 (SLEDKKKKLEETEKKG). Disordered stretches follow at residues 1017–1041 (SLED…SLTR) and 1098–1121 (SHSI…NEKQ). One can recognise a Dilute domain in the interval 1168-1481 (DRIIQTIGHA…IANMRVLMTE (314 aa)).

Belongs to the TRAFAC class myosin-kinesin ATPase superfamily. Myosin family. Plant myosin class XI subfamily. In terms of assembly, homodimer.

Its function is as follows. Myosin heavy chain that is required for the cell cycle-regulated transport of various organelles and proteins for their segregation. Functions by binding with its tail domain to receptor proteins on organelles and exerting force with its N-terminal motor domain against actin filaments, thereby transporting its cargo along polarized actin cables. Involved in trafficking of Golgi stacks and mitochondria. The sequence is that of Myosin-9 (XI-C) from Arabidopsis thaliana (Mouse-ear cress).